A 481-amino-acid chain; its full sequence is Guanine nucleotide exchange factor C9orf72 (481 aa).

The region spanning 23–194 (SPLLAATFAY…ELLSSMKSHS (172 aa)) is the uDENN C9ORF72-type domain. Residues 200-343 (DIADTVLNDD…SELTAFWRAT (144 aa)) form the cDENN C9ORF72-type domain. Residues 370–464 (VLHRDTLVKA…IKPGLHSFIF (95 aa)) enclose the dDENN C9ORF72-type domain. Positions 461–481 (SFIFGRPFYTSVQERDVLMTF) are required for the homodimerization of the C9orf72-SMCR8 complex.

In terms of assembly, component of the C9orf72-SMCR8 complex, at least composed of C9orf72, SMCR8 and WDR41. The complex is formed of two protomers, each individually consisting of one molecule each of C9orf72, SMCR8 and WDR41. The protomers homodimerize via an interaction between C9orf72 (via C-terminus) and SMCR8 (via N-terminus). Within each protomer SMCR8 (via DENN domain) acts as a bridging protein between WDR41 (via C-terminus and N-terminus) and C9orf72 (via C-terminus). The C9orf72-SMCR8 complex associates with the ULK1/ATG1 kinase complex. Interacts with ULK1/ATG1 kinase complex members ULK1, ATG13 and RB1CC1. Interacts with SMCR8; the interaction is direct. Interacts with HNRNPA1, HNRNPA2B1 and UBQLN2. Interacts with small Rab GTPase RAB1A; the interaction mediates recruitment of RAB1A to the ULK1/ATG1 kinase complex. Also interacts with small Rab GTPase RAB7A. Interacts with cofilin. Interacts with GTP-binding proteins ARF1 and ARF6. Interacts with the DLG4/PSD-95. Interacts with CARM1 (via PH domain-like fold). Interacts with RAB39A and RAB39B (in GDP-bound forms); functions as GEF for RAB39A and RAB39B. In terms of tissue distribution, both isoforms are widely expressed, including kidney, lung, liver, heart, testis and several brain regions, such as cerebellum. Also expressed in the frontal cortex and in lymphoblasts (at protein level).

The protein resides in the cytoplasm. Its subcellular location is the nucleus. It is found in the P-body. The protein localises to the stress granule. It localises to the endosome. The protein resides in the lysosome. Its subcellular location is the cytoplasmic vesicle. It is found in the autophagosome. The protein localises to the autolysosome. It localises to the secreted. The protein resides in the cell projection. Its subcellular location is the axon. It is found in the growth cone. The protein localises to the perikaryon. It localises to the dendrite. The protein resides in the presynapse. Its subcellular location is the postsynapse. It is found in the nucleus membrane. Acts as a guanine-nucleotide releasing factor (GEF) for Rab GTPases by promoting the conversion of inactive RAB-GDP to the active form RAB-GTP. Acts as a GEF for RAB39A which enables HOPS-mediated autophagosome-lysosome membrane tethering and fusion in mammalian autophagy. Component of the C9orf72-SMCR8 complex where both subunits display GEF activity and that regulates autophagy. As part of the C9orf72-SMCR8-WDR41 (CSW) complex, functions as GEF for RAB8A and RAB39B, thereby promoting autophagosome maturation. As part of the C9orf72-SMCR8 complex, also functions as GTPase activating protein (GAP) for RAB8A and RAB11A in vitro. The C9orf72-SMCR8 complex also acts as a regulator of autophagy initiation by interacting with the ULK1/ATG1 kinase complex and modulating its protein kinase activity. Promotes initiation of autophagy by regulating the RAB1A-dependent trafficking of the ULK1/ATG1 kinase complex to the phagophore which leads to autophagosome formation. Acts as a regulator of mTORC1 signaling by promoting phosphorylation of mTORC1 substrates. Plays a role in endosomal trafficking. May be involved in regulating the maturation of phagosomes to lysosomes. Promotes the lysosomal localization and lysosome-mediated degradation of CARM1 which leads to inhibition of starvation-induced lipid metabolism. Regulates actin dynamics in motor neurons by inhibiting the GTP-binding activity of ARF6, leading to ARF6 inactivation. This reduces the activity of the LIMK1 and LIMK2 kinases which are responsible for phosphorylation and inactivation of cofilin, leading to CFL1/cofilin activation. Positively regulates axon extension and axon growth cone size in spinal motor neurons. Required for SMCR8 protein expression and localization at pre- and post-synaptic compartments in the forebrain, also regulates protein abundance of RAB3A and GRIA1/GLUR1 in post-synaptic compartments in the forebrain and hippocampus. Plays a role within the hematopoietic system in restricting inflammation and the development of autoimmunity. In terms of biological role, regulates stress granule assembly in response to cellular stress. Functionally, does not play a role in regulation of stress granule assembly in response to cellular stress. In Homo sapiens (Human), this protein is Guanine nucleotide exchange factor C9orf72.